The sequence spans 509 residues: Cobyric acid synthase (509 aa).

Residues 262-459 enclose the GATase cobBQ-type domain; it reads EIKVGIIKLP…IHGIFENDIW (198 aa). The active-site Nucleophile is the cysteine 343. Histidine 451 is a catalytic residue.

It belongs to the CobB/CobQ family. CobQ subfamily.

Its pathway is cofactor biosynthesis; adenosylcobalamin biosynthesis. In terms of biological role, catalyzes amidations at positions B, D, E, and G on adenosylcobyrinic A,C-diamide. NH(2) groups are provided by glutamine, and one molecule of ATP is hydrogenolyzed for each amidation. The polypeptide is Cobyric acid synthase (Prochlorococcus marinus (strain MIT 9312)).